The chain runs to 118 residues: Small ribosomal subunit protein uS13 (118 aa).

Positions 91-118 are disordered; the sequence is HRRSLPVRGQRTKTNARTRKGPRKPIKA.

It belongs to the universal ribosomal protein uS13 family. In terms of assembly, part of the 30S ribosomal subunit. Forms a loose heterodimer with protein S19. Forms two bridges to the 50S subunit in the 70S ribosome.

In terms of biological role, located at the top of the head of the 30S subunit, it contacts several helices of the 16S rRNA. In the 70S ribosome it contacts the 23S rRNA (bridge B1a) and protein L5 of the 50S subunit (bridge B1b), connecting the 2 subunits; these bridges are implicated in subunit movement. Contacts the tRNAs in the A and P-sites. This chain is Small ribosomal subunit protein uS13, found in Francisella tularensis subsp. tularensis (strain FSC 198).